We begin with the raw amino-acid sequence, 100 residues long: MNSYIREKVDEYRERYDLPDLKVTRSDKEGKRLKAVYTDKDGHRKKIYFGQEGAYTYADGAPDYVRNAYHARASGQYTKKGKQAISIPGSAASLSYNILW.

The protein localises to the virion. This is an uncharacterized protein from Acanthamoeba polyphaga mimivirus (APMV).